Consider the following 146-residue polypeptide: Stress enhanced protein 1, chloroplastic (146 aa).

The N-terminal 73 residues, M1 to R73, are a transit peptide targeting the chloroplast. Helical transmembrane passes span L84–I104 and L120–F140.

Belongs to the ELIP/psbS family.

It is found in the plastid. The protein localises to the chloroplast thylakoid membrane. Its function is as follows. May be involved in non-photochemical quenching, a process that maintains the balance between dissipation and utilization of light energy to minimize generation of oxidizing molecules, thereby protecting the plant against photo-oxidative damage. May play a photoprotective role in the thylakoid membrane in response to light stress. This is Stress enhanced protein 1, chloroplastic from Arabidopsis thaliana (Mouse-ear cress).